The following is a 181-amino-acid chain: ATP synthase subunit delta (181 aa).

Belongs to the ATPase delta chain family. As to quaternary structure, F-type ATPases have 2 components, F(1) - the catalytic core - and F(0) - the membrane proton channel. F(1) has five subunits: alpha(3), beta(3), gamma(1), delta(1), epsilon(1). F(0) has three main subunits: a(1), b(2) and c(10-14). The alpha and beta chains form an alternating ring which encloses part of the gamma chain. F(1) is attached to F(0) by a central stalk formed by the gamma and epsilon chains, while a peripheral stalk is formed by the delta and b chains.

Its subcellular location is the cell inner membrane. In terms of biological role, f(1)F(0) ATP synthase produces ATP from ADP in the presence of a proton or sodium gradient. F-type ATPases consist of two structural domains, F(1) containing the extramembraneous catalytic core and F(0) containing the membrane proton channel, linked together by a central stalk and a peripheral stalk. During catalysis, ATP synthesis in the catalytic domain of F(1) is coupled via a rotary mechanism of the central stalk subunits to proton translocation. Functionally, this protein is part of the stalk that links CF(0) to CF(1). It either transmits conformational changes from CF(0) to CF(1) or is implicated in proton conduction. The chain is ATP synthase subunit delta from Hyphomonas neptunium (strain ATCC 15444).